Here is a 247-residue protein sequence, read N- to C-terminus: Pyridoxine 5'-phosphate synthase (247 aa).

Position 7 (Asn7) interacts with 3-amino-2-oxopropyl phosphate. Asp9–His10 contacts 1-deoxy-D-xylulose 5-phosphate. Arg18 provides a ligand contact to 3-amino-2-oxopropyl phosphate. His43 (proton acceptor) is an active-site residue. 1-deoxy-D-xylulose 5-phosphate contacts are provided by Arg45 and His50. Glu70 serves as the catalytic Proton acceptor. Thr100 provides a ligand contact to 1-deoxy-D-xylulose 5-phosphate. His190 serves as the catalytic Proton donor. Residues Gly191 and Gly212 to His213 each bind 3-amino-2-oxopropyl phosphate.

Belongs to the PNP synthase family. Homooctamer; tetramer of dimers.

Its subcellular location is the cytoplasm. The enzyme catalyses 3-amino-2-oxopropyl phosphate + 1-deoxy-D-xylulose 5-phosphate = pyridoxine 5'-phosphate + phosphate + 2 H2O + H(+). The protein operates within cofactor biosynthesis; pyridoxine 5'-phosphate biosynthesis; pyridoxine 5'-phosphate from D-erythrose 4-phosphate: step 5/5. Functionally, catalyzes the complicated ring closure reaction between the two acyclic compounds 1-deoxy-D-xylulose-5-phosphate (DXP) and 3-amino-2-oxopropyl phosphate (1-amino-acetone-3-phosphate or AAP) to form pyridoxine 5'-phosphate (PNP) and inorganic phosphate. This chain is Pyridoxine 5'-phosphate synthase, found in Synechococcus sp. (strain WH7803).